The following is a 585-amino-acid chain: Testis-specific serine kinase substrate (585 aa).

Residues 91–108 show a composition bias toward low complexity; it reads EPDSSGTDSTTEDSGPLA. Residues 91 to 125 form a disordered region; that stretch reads EPDSSGTDSTTEDSGPLALPGPPASPTTPWAPEDP. Serine 224 carries the post-translational modification Phosphoserine. Disordered regions lie at residues 264 to 312 and 559 to 585; these read HGLS…SEQE and LEGSTGAMGGGSNGGAPPKRGSPGSEQ. Serine 281 is modified (phosphoserine; by TSSK1 and TSSK2). Serine 309 carries the phosphoserine modification.

In terms of processing, phosphorylated on serine residue(s) by STK22A/TSSK1 and STK22B/TSSK2. In terms of tissue distribution, testis specific.

The protein resides in the cytoplasm. It localises to the cytoskeleton. Its subcellular location is the microtubule organizing center. The protein localises to the centrosome. It is found in the centriole. The protein resides in the cytoplasmic vesicle. It localises to the secretory vesicle. Its subcellular location is the acrosome. In terms of biological role, may play a role in testicular physiology, most probably in the process of spermatogenesis or spermatid development. This chain is Testis-specific serine kinase substrate (Tsks), found in Mus musculus (Mouse).